The sequence spans 515 residues: Histidine ammonia-lyase (515 aa).

A cross-link (5-imidazolinone (Ala-Gly)) is located at residues 145–147; the sequence is ASG. Ser-146 is modified (2,3-didehydroalanine (Ser)).

Belongs to the PAL/histidase family. Contains an active site 4-methylidene-imidazol-5-one (MIO), which is formed autocatalytically by cyclization and dehydration of residues Ala-Ser-Gly.

The protein localises to the cytoplasm. The enzyme catalyses L-histidine = trans-urocanate + NH4(+). The protein operates within amino-acid degradation; L-histidine degradation into L-glutamate; N-formimidoyl-L-glutamate from L-histidine: step 1/3. The polypeptide is Histidine ammonia-lyase (Gluconobacter oxydans (strain 621H) (Gluconobacter suboxydans)).